The chain runs to 310 residues: Porphobilinogen deaminase (310 aa).

Cys242 bears the S-(dipyrrolylmethanemethyl)cysteine mark.

The protein belongs to the HMBS family. Monomer. It depends on dipyrromethane as a cofactor.

It catalyses the reaction 4 porphobilinogen + H2O = hydroxymethylbilane + 4 NH4(+). It participates in porphyrin-containing compound metabolism; protoporphyrin-IX biosynthesis; coproporphyrinogen-III from 5-aminolevulinate: step 2/4. In terms of biological role, tetrapolymerization of the monopyrrole PBG into the hydroxymethylbilane pre-uroporphyrinogen in several discrete steps. In Shewanella pealeana (strain ATCC 700345 / ANG-SQ1), this protein is Porphobilinogen deaminase.